Reading from the N-terminus, the 458-residue chain is Preferentially expressed antigen in melanoma-like protein 1 (458 aa).

The stretch at 99–126 (RCKLQVLDLRVMPLKLWNRLPVFGTAGC) is one LRR 1; degenerate repeat. Residues 176-200 (SLCCCKLQIWAMSMYYHRKLLEILD) form an LRR 2; degenerate repeat. An LRR 3; degenerate repeat occupies 201–227 (LDSVQELRMYCISNPVCLLNFAPYLGR). The stretch at 228–263 (MRNLRCLILSHLWQTFSMTPVEKQQVITQFTSQFLK) is one LRR 4; degenerate repeat. 5 LRR repeats span residues 264 to 289 (LKCL…FWWL), 290 to 321 (KTPL…SQLK), 322 to 340 (HLNL…PLRV), 346 to 373 (ASTL…ALRC), and 374 to 398 (CTQL…LAYN).

This sequence belongs to the PRAME family. In terms of tissue distribution, specifically expressed in testis (at protein level).

The protein localises to the cytoplasm. The protein resides in the cytoplasmic vesicle. Its subcellular location is the secretory vesicle. It localises to the acrosome. It is found in the cell projection. The protein localises to the cilium. The protein resides in the flagellum. Its function is as follows. May play a role in acrosome development and also in sperm maturation and motility. This is Preferentially expressed antigen in melanoma-like protein 1 from Mus musculus (Mouse).